Here is a 113-residue protein sequence, read N- to C-terminus: U11-theraphotoxin-Hhn1r (113 aa).

The first 21 residues, M1–A21, serve as a signal peptide directing secretion. The propeptide occupies D22 to R74. Residues E61 to D83 are disordered. 3 cysteine pairs are disulfide-bonded: C75/C90, C82/C95, and C89/C110.

This sequence belongs to the neurotoxin 14 (magi-1) family. 01 (HNTX-16) subfamily. Expressed by the venom gland.

It localises to the secreted. In terms of biological role, probable ion channel inhibitor. This is U11-theraphotoxin-Hhn1r from Cyriopagopus hainanus (Chinese bird spider).